A 332-amino-acid chain; its full sequence is Abscisic acid-inducible protein kinase (332 aa).

Residues 1-8 and lysine 23 each bind ATP; that span reads GSGNFGVA. The region spanning 1 to 250 is the Protein kinase domain; sequence GSGNFGVAKL…IPEIKNHPWF (250 aa). The active-site Proton acceptor is the aspartate 113.

It belongs to the protein kinase superfamily. Ser/Thr protein kinase family. Post-translationally, autophosphorylated.

The enzyme catalyses L-seryl-[protein] + ATP = O-phospho-L-seryl-[protein] + ADP + H(+). It catalyses the reaction L-threonyl-[protein] + ATP = O-phospho-L-threonyl-[protein] + ADP + H(+). Involved in water-stress responses. In Triticum aestivum (Wheat), this protein is Abscisic acid-inducible protein kinase.